The chain runs to 163 residues: ATP synthase subunit b' (163 aa).

A helical membrane pass occupies residues Leu-28 to Tyr-45.

The protein belongs to the ATPase B chain family. F-type ATPases have 2 components, F(1) - the catalytic core - and F(0) - the membrane proton channel. F(1) has five subunits: alpha(3), beta(3), gamma(1), delta(1), epsilon(1). F(0) has four main subunits: a(1), b(1), b'(1) and c(10-14). The alpha and beta chains form an alternating ring which encloses part of the gamma chain. F(1) is attached to F(0) by a central stalk formed by the gamma and epsilon chains, while a peripheral stalk is formed by the delta, b and b' chains.

It is found in the cellular thylakoid membrane. Its function is as follows. F(1)F(0) ATP synthase produces ATP from ADP in the presence of a proton or sodium gradient. F-type ATPases consist of two structural domains, F(1) containing the extramembraneous catalytic core and F(0) containing the membrane proton channel, linked together by a central stalk and a peripheral stalk. During catalysis, ATP synthesis in the catalytic domain of F(1) is coupled via a rotary mechanism of the central stalk subunits to proton translocation. Component of the F(0) channel, it forms part of the peripheral stalk, linking F(1) to F(0). The b'-subunit is a diverged and duplicated form of b found in plants and photosynthetic bacteria. This chain is ATP synthase subunit b', found in Nostoc sp. (strain PCC 7120 / SAG 25.82 / UTEX 2576).